We begin with the raw amino-acid sequence, 447 residues long: Dihydroorotase (447 aa).

The Zn(2+) site is built by His81 and His83. Substrate contacts are provided by residues 83–85 (HFR) and Asn115. Zn(2+) contacts are provided by Asp171, His198, and His252. Position 298 (Asn298) interacts with substrate. Asp325 serves as a coordination point for Zn(2+). Residue Asp325 is part of the active site. Substrate contacts are provided by residues His329 and 343–344 (FG).

It belongs to the metallo-dependent hydrolases superfamily. DHOase family. Class I DHOase subfamily. Requires Zn(2+) as cofactor.

It catalyses the reaction (S)-dihydroorotate + H2O = N-carbamoyl-L-aspartate + H(+). Its pathway is pyrimidine metabolism; UMP biosynthesis via de novo pathway; (S)-dihydroorotate from bicarbonate: step 3/3. Its function is as follows. Catalyzes the reversible cyclization of carbamoyl aspartate to dihydroorotate. This is Dihydroorotase from Ehrlichia chaffeensis (strain ATCC CRL-10679 / Arkansas).